The following is a 1332-amino-acid chain: Misshapen-like kinase 1 (1332 aa).

The region spanning 25–289 (FELVEVVGNG…TEQLLKFPFI (265 aa)) is the Protein kinase domain. ATP contacts are provided by residues 31-39 (VGNGTYGQV) and K54. The active-site Proton acceptor is the D153. Disordered stretches follow at residues 300-347 (IQLK…NVPG), 363-383 (KSNS…QRDP), and 395-887 (QRRI…GTMV). Residues 317-333 (EETEYEYSGSEEEDDSH) are compositionally biased toward acidic residues. Phosphoserine is present on residues S324 and S326. Low complexity predominate over residues 371-380 (QQQQLQQQQQ). Over residues 396-466 (RRIEEQKEER…EEQRQSERLQ (71 aa)) the composition is skewed to basic and acidic residues. Residues 479–497 (LQQQQQQQQLQKQQQQQLL) show a composition bias toward low complexity. Residues R501 and R509 each carry the omega-N-methylarginine modification. Over residues 518-528 (AWAREVEERTR) the composition is skewed to basic and acidic residues. Residues 547 to 561 (PEPPIPQASPGPPGP) are compositionally biased toward pro residues. Positions 598–608 (RSQSLQDQPTR) are enriched in polar residues. Phosphoserine is present on S641. Residues 670–682 (QRTSSIATALNTS) show a composition bias toward polar residues. S701 carries the phosphoserine modification. Over residues 716 to 729 (PKPPGPPAQPPGPP) the composition is skewed to pro residues. Residues 736-748 (DLRRSDPGWERSD) are compositionally biased toward basic and acidic residues. A phosphoserine mark is found at S754, S763, S777, S778, and S782. Residues 804 to 821 (LLKERTLDEAPRPPKKAM) are compositionally biased toward basic and acidic residues. The span at 828–841 (EEVESSEDDEEEGE) shows a compositional bias: acidic residues. The segment at 866 to 1332 (MVVHDVEEIT…TLNRNCIMNW (467 aa)) is mediates interaction with RAP2A. T891 bears the Phosphothreonine mark. A disordered region spans residues 902 to 943 (DSNGYTNLPDVVQPSHSPTENSKGQSPPSKDGSGDYQSRGLV). Residues 915–929 (PSHSPTENSKGQSPP) are compositionally biased toward polar residues. Residues 1019-1306 (NSEILCAALW…KFLCERNDKV (288 aa)) form the CNH domain.

The protein belongs to the protein kinase superfamily. STE Ser/Thr protein kinase family. STE20 subfamily. As to quaternary structure, interacts with TANC1. Interacts with RAP2A. Isoform 4 interacts with NCK1. It depends on Mg(2+) as a cofactor. Post-translationally, autophosphorylated. As to expression, expressed in the brain, isoform 2 is more abundant than isoform 1. Isoform 3 is ubiquitously expressed. Isoform 1 is most abundant in the skeletal muscle. Isoform 4 is ubiquitously expressed with relative high levels in brain, skeletal muscle, pancreas and testis.

The protein resides in the cytoplasm. It is found in the postsynaptic density. The protein localises to the cell projection. Its subcellular location is the axon. It localises to the dendrite. The protein resides in the golgi apparatus. The catalysed reaction is L-seryl-[protein] + ATP = O-phospho-L-seryl-[protein] + ADP + H(+). It catalyses the reaction L-threonyl-[protein] + ATP = O-phospho-L-threonyl-[protein] + ADP + H(+). In terms of biological role, serine/threonine kinase which acts as a negative regulator of Ras-related Rap2-mediated signal transduction to control neuronal structure and AMPA receptor trafficking. Required for normal synaptic density, dendrite complexity, as well as surface AMPA receptor expression in hippocampal neurons. Can activate the JNK and MAPK14/p38 pathways and mediates stimulation of the stress-activated protein kinase MAPK14/p38 MAPK downstream of the Raf/ERK pathway. Phosphorylates TANC1 upon stimulation by RAP2A, MBP and SMAD1. Has an essential function in negative selection of thymocytes, perhaps by coupling NCK1 to activation of JNK1. Activator of the Hippo signaling pathway which plays a pivotal role in organ size control and tumor suppression by restricting proliferation and promoting apoptosis. MAP4Ks act in parallel to and are partially redundant with STK3/MST2 and STK4/MST2 in the phosphorylation and activation of LATS1/2, and establish MAP4Ks as components of the expanded Hippo pathway. Isoform 4 can activate the JNK pathway. Involved in the regulation of actin cytoskeleton reorganization, cell-matrix adhesion, cell-cell adhesion and cell migration. The polypeptide is Misshapen-like kinase 1 (Homo sapiens (Human)).